The chain runs to 156 residues: Endoribonuclease YbeY (156 aa).

Positions 122, 126, and 132 each coordinate Zn(2+).

The protein belongs to the endoribonuclease YbeY family. It depends on Zn(2+) as a cofactor.

Its subcellular location is the cytoplasm. In terms of biological role, single strand-specific metallo-endoribonuclease involved in late-stage 70S ribosome quality control and in maturation of the 3' terminus of the 16S rRNA. This is Endoribonuclease YbeY from Bacillus cereus (strain ATCC 10987 / NRS 248).